We begin with the raw amino-acid sequence, 104 residues long: AVIToxin-VAR2 (104 aa).

Positions 1–19 are cleaved as a signal peptide; the sequence is MRSLLCAPLLLLLLSAGES. 5 disulfides stabilise this stretch: Cys-26/Cys-38, Cys-32/Cys-50, Cys-37/Cys-78, Cys-60/Cys-86, and Cys-80/Cys-96.

It belongs to the AVIT (prokineticin) family. As to expression, expressed by the venom gland.

It localises to the secreted. Its function is as follows. Potent agonist for both PKR1/PROKR1 and PKR2/PROKR2. Potently contracts gastrointestinal (GI) smooth muscle. The protein is AVIToxin-VAR2 of Varanus varius (Lace monitor lizard).